The sequence spans 227 residues: Putative ankyrin repeat protein L45 (227 aa).

ANK repeat units lie at residues 38 to 66 (FETN…NINH), 78 to 107 (CLEE…NIFH), 108 to 137 (NENC…DVRA), 139 to 167 (NDYA…DVRS), 168 to 197 (CDSY…NYRA), and 199 to 227 (NHHA…GITK).

The sequence is that of Putative ankyrin repeat protein L45 from Acanthamoeba polyphaga mimivirus (APMV).